The sequence spans 485 residues: L-ornithine N(5)-oxygenase (485 aa).

FAD is bound by residues 49-57 (ERQQQFVWH) and Gln-68. An L-ornithine-binding site is contributed by Lys-73. An FAD-binding site is contributed by Val-134. An NADP(+)-binding site is contributed by Arg-243. L-ornithine contacts are provided by residues 257–260 (NEIF) and Asn-287. 287–289 (NYS) contacts NADP(+). Position 425-427 (425-427 (TLL)) interacts with FAD. Residue Ser-428 coordinates L-ornithine.

Belongs to the lysine N(6)-hydroxylase/L-ornithine N(5)-oxygenase family. As to quaternary structure, homotetramer. The cofactor is FAD.

It catalyses the reaction L-ornithine + NADH + O2 = N(5)-hydroxy-L-ornithine + NAD(+) + H2O. The enzyme catalyses L-ornithine + NADPH + O2 = N(5)-hydroxy-L-ornithine + NADP(+) + H2O. It participates in siderophore biosynthesis. In terms of biological role, L-ornithine N(5)-oxygenase; part of the gene cluster that mediates the biosynthesis of desferriferrichrome that chelates Fe(3+) to form ferrichrome. Fe(3+) is a key factor for induction of trap formation and the fungus uses the iron chelating desferriferrichrome to sequester Fe(3+) to inhibit trap formation and increase nematicidal activity. The biosynthesis of desferriferrichrome requires the action of the L-ornithine N(5)-oxygenase (LOO) Ao414 that hydroxylates L-ornithine at N(5), resulting in the formation of N(5)-hydroxyl-L-ornithine, which is subsequently N-acetylated to yield N(5)-acetyl-N(5)-hydroxy-L-ornithine (L-AHO). L-AHO harbors one hydroxamate moiety, which is the key core responsible for chelating iron. Then, L-AHO is further condensated with glycines to form desferriferrichrome through the NRPS protein Ao415. The protein is L-ornithine N(5)-oxygenase of Arthrobotrys oligospora (strain ATCC 24927 / CBS 115.81 / DSM 1491) (Nematode-trapping fungus).